The chain runs to 254 residues: Rho-related protein racD (254 aa).

G15–T22 provides a ligand contact to GTP. Residues Y37–F45 carry the Effector region motif. GTP-binding positions include D62–Q66 and T120–D123. The span at A186–P231 shows a compositional bias: low complexity. The disordered stretch occupies residues A186 to K254. The segment covering A232 to K254 has biased composition (basic and acidic residues).

Belongs to the small GTPase superfamily. Rho family.

The chain is Rho-related protein racD (racD) from Dictyostelium discoideum (Social amoeba).